The following is a 271-amino-acid chain: Protein CDV3 homolog (271 aa).

Over residues 37–47 (KREVVKPKKPE) the composition is skewed to basic and acidic residues. Disordered regions lie at residues 37-151 (KREV…GHGP) and 186-271 (SQQA…DEAS). Positions 48 to 61 (VAAGGVAVVGENEN) are enriched in low complexity. The segment covering 73–82 (VEEEWKEFEE) has biased composition (acidic residues). Residues 95–114 (QLSTISSARSRTAQESSESQ) are compositionally biased toward polar residues. Ser134 bears the Phosphoserine mark. The span at 224–242 (RPEEQRKKKNEPAFEEVRH) shows a compositional bias: basic and acidic residues.

The protein belongs to the CDV3 family.

The chain is Protein CDV3 homolog from Drosophila melanogaster (Fruit fly).